The following is a 145-amino-acid chain: Transcriptional regulator MraZ (145 aa).

SpoVT-AbrB domains lie at 5-49 (TYNH…LESE) and 78-121 (TYKI…AKEV).

This sequence belongs to the MraZ family. As to quaternary structure, forms oligomers.

The protein localises to the cytoplasm. It localises to the nucleoid. The polypeptide is Transcriptional regulator MraZ (Ureaplasma parvum serovar 3 (strain ATCC 27815 / 27 / NCTC 11736)).